A 396-amino-acid chain; its full sequence is Phosphoglycerate kinase (396 aa).

Residues 21–23 (DLN), Arg36, 59–62 (HLGR), Arg113, and Arg146 contribute to the substrate site. Residues Lys197, Glu319, and 345–348 (GGDT) each bind ATP.

It belongs to the phosphoglycerate kinase family. In terms of assembly, monomer.

It localises to the cytoplasm. The catalysed reaction is (2R)-3-phosphoglycerate + ATP = (2R)-3-phospho-glyceroyl phosphate + ADP. It functions in the pathway carbohydrate degradation; glycolysis; pyruvate from D-glyceraldehyde 3-phosphate: step 2/5. This Legionella pneumophila (strain Corby) protein is Phosphoglycerate kinase.